Here is a 145-residue protein sequence, read N- to C-terminus: Cell wall teichoic acid glycosylation protein GtcA (145 aa).

Transmembrane regions (helical) follow at residues 21–41 (IFMY…TFWL), 45–65 (ILNW…VLFA), 91–111 (FFGF…LLIS), and 122–142 (IWTN…IIFK).

Belongs to the GtrA family.

The protein resides in the cell membrane. Involved in the decoration of cell wall teichoic acid with galactose and glucose. In Listeria monocytogenes, this protein is Cell wall teichoic acid glycosylation protein GtcA (gtcA).